Consider the following 955-residue polypeptide: Leucine--tRNA ligase (955 aa).

Positions 51–61 match the 'HIGH' region motif; that stretch reads PYLNGVLHAGH. Residues 647-651 carry the 'KMSKS' region motif; sequence KLSKS. An ATP-binding site is contributed by Lys-650.

This sequence belongs to the class-I aminoacyl-tRNA synthetase family.

The protein resides in the cytoplasm. It carries out the reaction tRNA(Leu) + L-leucine + ATP = L-leucyl-tRNA(Leu) + AMP + diphosphate. The protein is Leucine--tRNA ligase of Methanococcus maripaludis (strain DSM 14266 / JCM 13030 / NBRC 101832 / S2 / LL).